A 317-amino-acid polypeptide reads, in one-letter code: uncharacterized protein (317 aa).

Residues 1 to 16 (MKLSFILSTLVAGALA) form the signal peptide. A glycan (N-linked (GlcNAc...) asparagine) is linked at Asn42. Low complexity-rich tracts occupy residues 150 to 238 (SSST…SSSS) and 247 to 259 (TAST…ASSA). Residues 150-259 (SSSTPSSSSS…TDDSSSASSA (110 aa)) form a disordered region.

This is an uncharacterized protein from Schizosaccharomyces pombe (strain 972 / ATCC 24843) (Fission yeast).